A 517-amino-acid polypeptide reads, in one-letter code: ATP synthase subunit alpha 1 (517 aa).

174–181 (GDRQTGKT) contacts ATP.

Belongs to the ATPase alpha/beta chains family. As to quaternary structure, F-type ATPases have 2 components, CF(1) - the catalytic core - and CF(0) - the membrane proton channel. CF(1) has five subunits: alpha(3), beta(3), gamma(1), delta(1), epsilon(1). CF(0) has three main subunits: a(1), b(2) and c(9-12). The alpha and beta chains form an alternating ring which encloses part of the gamma chain. CF(1) is attached to CF(0) by a central stalk formed by the gamma and epsilon chains, while a peripheral stalk is formed by the delta and b chains.

The protein localises to the cell inner membrane. The catalysed reaction is ATP + H2O + 4 H(+)(in) = ADP + phosphate + 5 H(+)(out). Produces ATP from ADP in the presence of a proton gradient across the membrane. The alpha chain is a regulatory subunit. The polypeptide is ATP synthase subunit alpha 1 (Albidiferax ferrireducens (strain ATCC BAA-621 / DSM 15236 / T118) (Rhodoferax ferrireducens)).